A 984-amino-acid polypeptide reads, in one-letter code: Valine--tRNA ligase (984 aa).

Positions 65 to 75 (PNVTGSLHMGH) match the 'HIGH' region motif. A 'KMSKS' region motif is present at residues 579-583 (KMSKS). K582 provides a ligand contact to ATP. Residues 954-984 (VEVVDAEKAKLAELEGQLTAMTAQMEELKNL) are a coiled coil.

Belongs to the class-I aminoacyl-tRNA synthetase family. ValS type 1 subfamily. As to quaternary structure, monomer.

It is found in the cytoplasm. The catalysed reaction is tRNA(Val) + L-valine + ATP = L-valyl-tRNA(Val) + AMP + diphosphate. Catalyzes the attachment of valine to tRNA(Val). As ValRS can inadvertently accommodate and process structurally similar amino acids such as threonine, to avoid such errors, it has a 'posttransfer' editing activity that hydrolyzes mischarged Thr-tRNA(Val) in a tRNA-dependent manner. The protein is Valine--tRNA ligase of Psychrobacter arcticus (strain DSM 17307 / VKM B-2377 / 273-4).